Reading from the N-terminus, the 304-residue chain is Ribosomal RNA small subunit methyltransferase H (304 aa).

S-adenosyl-L-methionine contacts are provided by residues 47–49, aspartate 66, phenylalanine 93, aspartate 108, and glutamine 115; that span reads GGH.

This sequence belongs to the methyltransferase superfamily. RsmH family.

It localises to the cytoplasm. The enzyme catalyses cytidine(1402) in 16S rRNA + S-adenosyl-L-methionine = N(4)-methylcytidine(1402) in 16S rRNA + S-adenosyl-L-homocysteine + H(+). In terms of biological role, specifically methylates the N4 position of cytidine in position 1402 (C1402) of 16S rRNA. The polypeptide is Ribosomal RNA small subunit methyltransferase H (Prochlorococcus marinus (strain NATL1A)).